Reading from the N-terminus, the 187-residue chain is Probable chemoreceptor glutamine deamidase CheD (187 aa).

Residues alanine 164–phenylalanine 187 are disordered.

It belongs to the CheD family.

It carries out the reaction L-glutaminyl-[protein] + H2O = L-glutamyl-[protein] + NH4(+). Its function is as follows. Probably deamidates glutamine residues to glutamate on methyl-accepting chemotaxis receptors (MCPs), playing an important role in chemotaxis. The protein is Probable chemoreceptor glutamine deamidase CheD of Caulobacter vibrioides (strain ATCC 19089 / CIP 103742 / CB 15) (Caulobacter crescentus).